Reading from the N-terminus, the 92-residue chain is Small ribosomal subunit protein uS19c (92 aa).

Belongs to the universal ribosomal protein uS19 family. Component of the chloroplast small ribosomal subunit (SSU). Mature 70S chloroplast ribosomes of higher plants consist of a small (30S) and a large (50S) subunit. The 30S small subunit contains 1 molecule of ribosomal RNA (16S rRNA) and 24 different proteins. The 50S large subunit contains 3 rRNA molecules (23S, 5S and 4.5S rRNA) and 33 different proteins. uS19c binds directly to 16S ribosomal RNA.

The protein localises to the plastid. It is found in the chloroplast. Functionally, component of the chloroplast ribosome (chloro-ribosome), a dedicated translation machinery responsible for the synthesis of chloroplast genome-encoded proteins, including proteins of the transcription and translation machinery and components of the photosynthetic apparatus. The chain is Small ribosomal subunit protein uS19c (rps19) from Spinacia oleracea (Spinach).